The sequence spans 270 residues: Type III pantothenate kinase (270 aa).

An ATP-binding site is contributed by 11–18; it reads DAGNSRIK. Residues Y96 and 103–106 contribute to the substrate site; that span reads GSDR. The active-site Proton acceptor is D105. ATP is bound at residue T129. A substrate-binding site is contributed by T195.

Belongs to the type III pantothenate kinase family. Homodimer. It depends on NH4(+) as a cofactor. K(+) serves as cofactor.

The protein resides in the cytoplasm. The catalysed reaction is (R)-pantothenate + ATP = (R)-4'-phosphopantothenate + ADP + H(+). Its pathway is cofactor biosynthesis; coenzyme A biosynthesis; CoA from (R)-pantothenate: step 1/5. Catalyzes the phosphorylation of pantothenate (Pan), the first step in CoA biosynthesis. This is Type III pantothenate kinase from Paraburkholderia phytofirmans (strain DSM 17436 / LMG 22146 / PsJN) (Burkholderia phytofirmans).